We begin with the raw amino-acid sequence, 241 residues long: 1-(5-phosphoribosyl)-5-[(5-phosphoribosylamino)methylideneamino] imidazole-4-carboxamide isomerase (241 aa).

Asp10 (proton acceptor) is an active-site residue. Catalysis depends on Asp129, which acts as the Proton donor.

This sequence belongs to the HisA/HisF family.

The protein resides in the cytoplasm. The enzyme catalyses 1-(5-phospho-beta-D-ribosyl)-5-[(5-phospho-beta-D-ribosylamino)methylideneamino]imidazole-4-carboxamide = 5-[(5-phospho-1-deoxy-D-ribulos-1-ylimino)methylamino]-1-(5-phospho-beta-D-ribosyl)imidazole-4-carboxamide. Its pathway is amino-acid biosynthesis; L-histidine biosynthesis; L-histidine from 5-phospho-alpha-D-ribose 1-diphosphate: step 4/9. In Salinispora arenicola (strain CNS-205), this protein is 1-(5-phosphoribosyl)-5-[(5-phosphoribosylamino)methylideneamino] imidazole-4-carboxamide isomerase.